Reading from the N-terminus, the 365-residue chain is Histidinol-phosphate aminotransferase (365 aa).

A disordered region spans residues 1 to 22 (MSRPVPNPGILDIAPYTPGKSP). Residue Lys-221 is modified to N6-(pyridoxal phosphate)lysine.

The protein belongs to the class-II pyridoxal-phosphate-dependent aminotransferase family. Histidinol-phosphate aminotransferase subfamily. As to quaternary structure, homodimer. It depends on pyridoxal 5'-phosphate as a cofactor.

The catalysed reaction is L-histidinol phosphate + 2-oxoglutarate = 3-(imidazol-4-yl)-2-oxopropyl phosphate + L-glutamate. The protein operates within amino-acid biosynthesis; L-histidine biosynthesis; L-histidine from 5-phospho-alpha-D-ribose 1-diphosphate: step 7/9. This chain is Histidinol-phosphate aminotransferase, found in Rhodopseudomonas palustris (strain BisA53).